The following is a 467-amino-acid chain: Argininosuccinate lyase (467 aa).

It belongs to the lyase 1 family. Argininosuccinate lyase subfamily.

It is found in the cytoplasm. It catalyses the reaction 2-(N(omega)-L-arginino)succinate = fumarate + L-arginine. It functions in the pathway amino-acid biosynthesis; L-arginine biosynthesis; L-arginine from L-ornithine and carbamoyl phosphate: step 3/3. This chain is Argininosuccinate lyase, found in Anaeromyxobacter dehalogenans (strain 2CP-C).